We begin with the raw amino-acid sequence, 247 residues long: Programmed cell death 1 ligand 2 (247 aa).

Positions 1 to 19 (MLLLLPILNLSLQLHPVAA) are cleaved as a signal peptide. At 20–221 (LFTVTAPKEV…RMEPKVPRTW (202 aa)) the chain is on the extracellular side. In terms of domain architecture, Ig-like V-type spans 21 to 118 (FTVTAPKEVY…AWDYKYLTVK (98 aa)). 2 disulfide bridges follow: Cys42/Cys102 and Cys143/Cys192. 4 N-linked (GlcNAc...) asparagine glycosylation sites follow: Asn64, Asn157, Asn163, and Asn189. The Ig-like C2-type domain maps to 122 to 203 (SYMRIDTRIL…FWNAHMKELT (82 aa)). A helical transmembrane segment spans residues 222-242 (PLHVFIPACTIALIFLAIVII). The Cytoplasmic segment spans residues 243–247 (QRKRI).

It belongs to the immunoglobulin superfamily. BTN/MOG family. Interacts with PDCD1. Expressed in immature and mature bone marrow-derived dendritic cells and splenic dendritic cells. Highly expressed in placenta, liver and weakly expressed in heart, spleen, lymph nodes and thymus. Also expressed in some tumor cell lines of lymphoid origin.

The protein localises to the cell membrane. Its function is as follows. Involved in the costimulatory signal essential for T-cell proliferation and IFNG production in a PDCD1-independent manner. Interaction with PDCD1 inhibits T-cell proliferation by blocking cell cycle progression and cytokine production. This is Programmed cell death 1 ligand 2 (Pdcd1lg2) from Mus musculus (Mouse).